A 498-amino-acid chain; its full sequence is Succinate-semialdehyde dehydrogenase [NADP(+)] 1 (498 aa).

247 to 252 (GSTNVG) serves as a coordination point for NAD(+). Residues E269 and C303 contribute to the active site.

The protein belongs to the aldehyde dehydrogenase family. Homotetramer.

It is found in the cytoplasm. It catalyses the reaction succinate semialdehyde + NAD(+) + H2O = succinate + NADH + 2 H(+). It carries out the reaction succinate semialdehyde + NADP(+) + H2O = succinate + NADPH + 2 H(+). It functions in the pathway amino-acid degradation; 4-aminobutanoate degradation. Its function is as follows. Catalyzes the oxidation of succinate semialdehyde to succinate. Can utilize both NAD(+) or NADP(+) as a coenzyme. Functions in a gamma-aminobutyrate (GABA) degradation pathway that allows growth utilizing GABA as a nitrogen source. Functions in the GABA shunt, which allows to bypass 2 reactions in the TCA cycle by removing alpha-ketoglutarate from the cycle and feeding succinate and NADH back into the cycle. This is Succinate-semialdehyde dehydrogenase [NADP(+)] 1 (ssd1) from Schizosaccharomyces pombe (strain 972 / ATCC 24843) (Fission yeast).